Consider the following 344-residue polypeptide: MMIQSHPLLAAPLAVGDTIGFFSSSAPATVTAKNRFFRGVEFLQRKGFKLVSGKLTGKTDFYRSGTIKERAQEFNELVYNPDITCIMSTIGGDNSNSLLPFLDYDAIIANPKIIIGYSDTTALLAGIYAKTGLITFYGPALIPSFGEHPPLVDITYESFIKILTRKQSGIYTYTLPEKWSDESINWNENKILRPKKLYKNNCAFYGSGKVEGRVIGGNLNTLTGIWGSEWMPEILNGDILFIEDSRKSIATIERLFSMLKLNRVFDKVSAIILGKHELFDCAGSKRRPYEVLTEVLDGKQIPVLDGFDCSHTHPMLTLPLGVKLAIDFDNKNISITEQYLSTEK.

Belongs to the peptidase S66 family.

Its function is as follows. Involved in specific self-immunity to microcin C7. This chain is Microcin C7 self-immunity protein MccF (mccF), found in Escherichia coli.